Reading from the N-terminus, the 219-residue chain is Steroid receptor RNA activator 1 (219 aa).

2 disordered regions span residues M1–V90 and S192–S219. Residues Y23 to T32 are compositionally biased toward polar residues. S48 is modified (phosphoserine). Residues S55–G76 are compositionally biased toward pro residues. Over residues S192 to S203 the composition is skewed to basic and acidic residues. The span at A206–S219 shows a compositional bias: polar residues.

This sequence belongs to the SRA1 family. As to quaternary structure, SRA1 RNA exists in a ribonucleoprotein complex containing NCOA1. The RNA also forms a complex with PUS1 and RARG in the nucleus. Interacts with AR. Expressed in various prostate cancer cell lines.

The protein resides in the nucleus. Its subcellular location is the cytoplasm. Functionally, functional RNA which acts as a transcriptional coactivator that selectively enhances steroid receptor-mediated transactivation ligand-independently through a mechanism involving the modulating N-terminal domain (AF-1) of steroid receptors. Also mediates transcriptional coactivation of steroid receptors ligand-dependently through the steroid-binding domain (AF-2). Enhances cellular proliferation and differentiation and promotes apoptosis in vivo. May play a role in tumorigenesis. The chain is Steroid receptor RNA activator 1 from Rattus norvegicus (Rat).